A 132-amino-acid polypeptide reads, in one-letter code: Arginine decarboxylase proenzyme (132 aa).

Serine 70 functions as the Schiff-base intermediate with substrate; via pyruvic acid in the catalytic mechanism. Position 70 is a pyruvic acid (Ser); by autocatalysis (serine 70). The active-site Proton acceptor; for processing activity is histidine 75. Cysteine 90 (proton donor; for catalytic activity) is an active-site residue.

Belongs to the prokaryotic AdoMetDC family. Type 1 subfamily. In terms of assembly, heterooctamer of four alpha and four beta chains arranged as a tetramer of alpha/beta heterodimers. Pyruvate serves as cofactor. Is synthesized initially as an inactive proenzyme. Formation of the active enzyme involves a self-maturation process in which the active site pyruvoyl group is generated from an internal serine residue via an autocatalytic post-translational modification. Two non-identical subunits are generated from the proenzyme in this reaction, and the pyruvate is formed at the N-terminus of the alpha chain, which is derived from the carboxyl end of the proenzyme. The post-translation cleavage follows an unusual pathway, termed non-hydrolytic serinolysis, in which the side chain hydroxyl group of the serine supplies its oxygen atom to form the C-terminus of the beta chain, while the remainder of the serine residue undergoes an oxidative deamination to produce ammonia and the pyruvoyl group blocking the N-terminus of the alpha chain.

It catalyses the reaction L-arginine + H(+) = agmatine + CO2. Its pathway is amine and polyamine biosynthesis; agmatine biosynthesis; agmatine from L-arginine: step 1/1. Specifically catalyzes the decarboxylation of L-arginine to agmatine. Has no S-adenosylmethionine decarboxylase (AdoMetDC) activity. This is Arginine decarboxylase proenzyme from Aeropyrum pernix (strain ATCC 700893 / DSM 11879 / JCM 9820 / NBRC 100138 / K1).